The primary structure comprises 92 residues: C-C motif chemokine 3 (92 aa).

An N-terminal signal peptide occupies residues 1–23; that stretch reads MKVSTAALAVLLCTMALWNEVFS. Intrachain disulfides connect cysteine 34-cysteine 57 and cysteine 35-cysteine 73.

This sequence belongs to the intercrine beta (chemokine CC) family. As to quaternary structure, self-associates. Also heterodimer of MIP-1-alpha(4-69) and MIP-1-beta(3-69). Interacts with CCR1.

The protein resides in the secreted. In terms of biological role, monokine with inflammatory and chemokinetic properties. Binds to CCR1, CCR4 and CCR5. One of the major HIV-suppressive factors produced by CD8+ T-cells. Recombinant MIP-1-alpha induces a dose-dependent inhibition of different strains of HIV-1, HIV-2, and simian immunodeficiency virus (SIV). This chain is C-C motif chemokine 3 (Ccl3), found in Rattus norvegicus (Rat).